The primary structure comprises 225 residues: Endo-1,4-beta-xylanase (225 aa).

The first 31 residues, methionine 1 to arginine 31, serve as a signal peptide directing secretion. Glutamine 32 is modified (pyrrolidone carboxylic acid). One can recognise a GH11 domain in the interval glutamine 32–alanine 222. The active-site Nucleophile is glutamate 117. Cysteines 141 and 185 form a disulfide. Glutamate 209 serves as the catalytic Proton donor.

The enzyme catalyses Endohydrolysis of (1-&gt;4)-beta-D-xylosidic linkages in xylans.. It participates in glycan degradation; xylan degradation. In Thermomyces lanuginosus (Humicola lanuginosa), this protein is Endo-1,4-beta-xylanase (XYNA).